We begin with the raw amino-acid sequence, 453 residues long: Ribosomal protein uS12 methylthiotransferase RimO (453 aa).

Residues 4 to 120 (TSVHIVSLGC…IADHLRVLME (117 aa)) enclose the MTTase N-terminal domain. Positions 13, 49, 83, 161, 165, and 168 each coordinate [4Fe-4S] cluster. The 231-residue stretch at 147-377 (STPPYSAYLK…MEEQAVISHE (231 aa)) folds into the Radical SAM core domain. Residues 380 to 450 (QTLVGSLQEV…DYDLFAEVIS (71 aa)) form the TRAM domain.

This sequence belongs to the methylthiotransferase family. RimO subfamily. Requires [4Fe-4S] cluster as cofactor.

Its subcellular location is the cytoplasm. The enzyme catalyses L-aspartate(89)-[ribosomal protein uS12]-hydrogen + (sulfur carrier)-SH + AH2 + 2 S-adenosyl-L-methionine = 3-methylsulfanyl-L-aspartate(89)-[ribosomal protein uS12]-hydrogen + (sulfur carrier)-H + 5'-deoxyadenosine + L-methionine + A + S-adenosyl-L-homocysteine + 2 H(+). Its function is as follows. Catalyzes the methylthiolation of an aspartic acid residue of ribosomal protein uS12. The polypeptide is Ribosomal protein uS12 methylthiotransferase RimO (Syntrophus aciditrophicus (strain SB)).